The primary structure comprises 85 residues: Electron transfer flavoprotein regulatory factor 1 homolog (85 aa).

Belongs to the complex I LYR family. Highly expressed in the larval fat body.

Its subcellular location is the mitochondrion. Acts as a regulator of the electron transfer flavoprotein by promoting the removal of flavin from the ETF holoenzyme. May act with the ETF complex to coordinate lipid homeostasis in the fat body in response to stage-specific demands. In Drosophila melanogaster (Fruit fly), this protein is Electron transfer flavoprotein regulatory factor 1 homolog.